The following is a 412-amino-acid chain: MSKIKESSSGILGASNNTNKESSQKSARSIALPMTYALIGVSCLNVWNSALGLNIKITYNIFQMAGLLTSSVLALFVNYPRVLLPTSLGVLTLLCAGFQIAHQTFSDSAFDTYCLAAFITIGLMAGIAQTIAFAIGTTKESNMSGYISAGIGMSGVLIFCINLILDYIVSDEKIYEINKSKLLCLFSISEIFLIITIVCCVLYIDLFPKNDNNKDSTDIEKAEEKEGRLPLIEIIKDGYKAILSIFLVNWLSLQLFPGIGHKKWQEKHGMTDNNVTIIVGMFQVFDFISRYPPNFTHIKIFKYFTFSLNTLLIGNFLRLLFIPWFVLNAVISSSFFTNIVQQCVCIAALAFTNGWFNTVPFIVFVKELKKVKHQKDIETISRIMVVSLFFGLFFGMLTTCLYDYFPIGILNN.

Residues 1–21 are disordered; it reads MSKIKESSSGILGASNNTNKE. At 1-29 the chain is on the cytoplasmic side; that stretch reads MSKIKESSSGILGASNNTNKESSQKSARS. Residues 7–21 show a composition bias toward polar residues; it reads SSSGILGASNNTNKE. The chain crosses the membrane as a helical span at residues 30–50; it reads IALPMTYALIGVSCLNVWNSA. The Extracellular segment spans residues 51-56; the sequence is LGLNIK. A helical transmembrane segment spans residues 57-77; that stretch reads ITYNIFQMAGLLTSSVLALFV. Topologically, residues 78-81 are cytoplasmic; sequence NYPR. The chain crosses the membrane as a helical span at residues 82–102; that stretch reads VLLPTSLGVLTLLCAGFQIAH. Topologically, residues 103-114 are extracellular; that stretch reads QTFSDSAFDTYC. Residues 115–135 form a helical membrane-spanning segment; sequence LAAFITIGLMAGIAQTIAFAI. Residues 136–144 lie on the Cytoplasmic side of the membrane; it reads GTTKESNMS. Residues 145-165 traverse the membrane as a helical segment; sequence GYISAGIGMSGVLIFCINLIL. The Extracellular portion of the chain corresponds to 166 to 181; sequence DYIVSDEKIYEINKSK. Residues 182 to 202 form a helical membrane-spanning segment; it reads LLCLFSISEIFLIITIVCCVL. At 203 to 240 the chain is on the cytoplasmic side; it reads YIDLFPKNDNNKDSTDIEKAEEKEGRLPLIEIIKDGYK. A helical transmembrane segment spans residues 241-261; it reads AILSIFLVNWLSLQLFPGIGH. The Extracellular segment spans residues 262–271; it reads KKWQEKHGMT. A helical transmembrane segment spans residues 272-294; sequence DNNVTIIVGMFQVFDFISRYPPN. The Cytoplasmic portion of the chain corresponds to 295-310; it reads FTHIKIFKYFTFSLNT. The chain crosses the membrane as a helical span at residues 311-331; that stretch reads LLIGNFLRLLFIPWFVLNAVI. The Extracellular portion of the chain corresponds to 332–343; the sequence is SSSFFTNIVQQC. The helical transmembrane segment at 344 to 364 threads the bilayer; the sequence is VCIAALAFTNGWFNTVPFIVF. The Cytoplasmic portion of the chain corresponds to 365-382; that stretch reads VKELKKVKHQKDIETISR. The helical transmembrane segment at 383 to 403 threads the bilayer; that stretch reads IMVVSLFFGLFFGMLTTCLYD. Over 404 to 412 the chain is Extracellular; sequence YFPIGILNN.

It belongs to the SLC29A/ENT transporter (TC 2.A.57) family.

Its subcellular location is the cell membrane. It catalyses the reaction inosine(in) = inosine(out). The catalysed reaction is adenosine(in) = adenosine(out). It carries out the reaction hypoxanthine(out) = hypoxanthine(in). The enzyme catalyses guanosine(in) = guanosine(out). It catalyses the reaction guanine(out) = guanine(in). The catalysed reaction is thymidine(in) = thymidine(out). It carries out the reaction uridine(out) = uridine(in). The enzyme catalyses uracil(in) = uracil(out). It catalyses the reaction thymine(out) = thymine(in). The catalysed reaction is adenine(out) = adenine(in). It carries out the reaction cytosine(out) = cytosine(in). The enzyme catalyses xanthine(out) = xanthine(in). Its function is as follows. Nucleoside and nucleobase transporter with a broad substrate specificity. This Plasmodium berghei (strain Anka) protein is Nucleoside transporter 1.